Reading from the N-terminus, the 169-residue chain is Nicotinamide-nucleotide adenylyltransferase (169 aa).

The protein belongs to the archaeal NMN adenylyltransferase family.

It is found in the cytoplasm. The enzyme catalyses beta-nicotinamide D-ribonucleotide + ATP + H(+) = diphosphate + NAD(+). Its pathway is cofactor biosynthesis; NAD(+) biosynthesis; NAD(+) from nicotinamide D-ribonucleotide: step 1/1. The polypeptide is Nicotinamide-nucleotide adenylyltransferase (Picrophilus torridus (strain ATCC 700027 / DSM 9790 / JCM 10055 / NBRC 100828 / KAW 2/3)).